Reading from the N-terminus, the 183-residue chain is Large ribosomal subunit protein eL18 (183 aa).

Residues 151–183 (HFGPAPGAPRSHTKPYVRSKGHEQAKPSRRSNV) are disordered.

It belongs to the eukaryotic ribosomal protein eL18 family.

The protein resides in the cytoplasm. This is Large ribosomal subunit protein eL18 (RpL18) from Plutella xylostella (Diamondback moth).